Here is a 297-residue protein sequence, read N- to C-terminus: GTP cyclohydrolase FolE2 (297 aa).

Disordered regions lie at residues 1-21 (MTHA…SERD) and 180-207 (IRAE…RERP).

This sequence belongs to the GTP cyclohydrolase IV family.

It carries out the reaction GTP + H2O = 7,8-dihydroneopterin 3'-triphosphate + formate + H(+). Its pathway is cofactor biosynthesis; 7,8-dihydroneopterin triphosphate biosynthesis; 7,8-dihydroneopterin triphosphate from GTP: step 1/1. Its function is as follows. Converts GTP to 7,8-dihydroneopterin triphosphate. The sequence is that of GTP cyclohydrolase FolE2 from Methylibium petroleiphilum (strain ATCC BAA-1232 / LMG 22953 / PM1).